A 69-amino-acid polypeptide reads, in one-letter code: Sperm protamine P1 (69 aa).

The disordered stretch occupies residues 1 to 69; the sequence is MASYRNSRSR…RKRNNNTENK (69 aa). Composition is skewed to basic residues over residues 7 to 25 and 34 to 63; these read SRSR…RSRV and RSSR…RKRN.

The protein belongs to the protamine P1 family. Testis.

The protein resides in the nucleus. It is found in the chromosome. Its function is as follows. Protamines substitute for histones in the chromatin of sperm during the haploid phase of spermatogenesis. They compact sperm DNA into a highly condensed, stable and inactive complex. This chain is Sperm protamine P1 (PRM1), found in Perameles gunnii (Eastern barred bandicoot).